We begin with the raw amino-acid sequence, 387 residues long: tRNA N6-adenosine threonylcarbamoyltransferase (387 aa).

2 residues coordinate Fe cation: His-112 and His-116. Residues 134–138 (LASGG), Asp-167, Gly-180, and Asn-325 contribute to the substrate site. Asp-353 is a binding site for Fe cation.

It belongs to the KAE1 / TsaD family. It depends on Fe(2+) as a cofactor.

Its subcellular location is the cytoplasm. It catalyses the reaction L-threonylcarbamoyladenylate + adenosine(37) in tRNA = N(6)-L-threonylcarbamoyladenosine(37) in tRNA + AMP + H(+). In terms of biological role, required for the formation of a threonylcarbamoyl group on adenosine at position 37 (t(6)A37) in tRNAs that read codons beginning with adenine. Is involved in the transfer of the threonylcarbamoyl moiety of threonylcarbamoyl-AMP (TC-AMP) to the N6 group of A37, together with TsaE and TsaB. TsaD likely plays a direct catalytic role in this reaction. The polypeptide is tRNA N6-adenosine threonylcarbamoyltransferase (Rickettsia prowazekii (strain Madrid E)).